Consider the following 180-residue polypeptide: Large ribosomal subunit protein uL5 (180 aa).

Belongs to the universal ribosomal protein uL5 family. Part of the 50S ribosomal subunit; part of the 5S rRNA/L5/L18/L25 subcomplex. Contacts the 5S rRNA and the P site tRNA. Forms a bridge to the 30S subunit in the 70S ribosome.

In terms of biological role, this is one of the proteins that bind and probably mediate the attachment of the 5S RNA into the large ribosomal subunit, where it forms part of the central protuberance. In the 70S ribosome it contacts protein S13 of the 30S subunit (bridge B1b), connecting the 2 subunits; this bridge is implicated in subunit movement. Contacts the P site tRNA; the 5S rRNA and some of its associated proteins might help stabilize positioning of ribosome-bound tRNAs. The protein is Large ribosomal subunit protein uL5 of Stenotrophomonas maltophilia (strain R551-3).